The sequence spans 677 residues: MVSMHREDAQRREAEELRREIERHNHLYYVEAKPEISDYDFDRLLLRLIELEREHPELVTPDSPTGRVGGAVTREFPPVEHREPMLSLSNTYSIGEVEEFSARVGRLLEAEGIRDRDMVAELKFDGVAVSLLYRDGVLVRGATRGNGRRGDDITVNLRTVPTVPLRLQTLDTPFSLGEGREVEVRGEVFMRKEDFTALNDTRPEEDRFANPRNATAGTLKLQDSAEVAVRRLWFVAYYLDGIQDPDTPHFHRLQLLETAGFFTGGHYRLCKGMQEIAAFIARWNEERWHLPYETDGVVLKLNDVRQWKTLGATSKSPRWAIAYKYPAQQATTVLRDVVFQVGRLGTITPVAELEPVRLAGSTVSRSTLHNFDEMRRLGIMIGDRVVIEKSGEVIPKVIRVVTEARPVDARLVELPSRCPACSTPIVREEGEVGFYCPNEAGCPAQLKGRILHFASRNAMDIQNLGEALVEQLVAFGLVHDPGDLYFLQEPQLRNLERMGPKSAQNVVRALDESRSQSYARLLFALGIRHVGQATARELARAFPSIEALEAASEEELADVADIGPVIARSIREWFEAPAVSALLEKLRDARLPLAAEDPKPLINSNFEGLSVVFTGALLRHDRQSASELVLERGGKIVSTVSKKTGLVVAGREAGSKLEKALKLGLRVISEEEFEAML.

NAD(+)-binding positions include 38-42 (DYDFD), 87-88 (SL), and Glu121. Lys123 (N6-AMP-lysine intermediate) is an active-site residue. Positions 144, 187, 300, and 324 each coordinate NAD(+). Residues Cys418, Cys421, Cys436, and Cys442 each coordinate Zn(2+). Residues 601–677 (LINSNFEGLS…ISEEEFEAML (77 aa)) form the BRCT domain.

This sequence belongs to the NAD-dependent DNA ligase family. LigA subfamily. The cofactor is Mg(2+). Mn(2+) is required as a cofactor.

It catalyses the reaction NAD(+) + (deoxyribonucleotide)n-3'-hydroxyl + 5'-phospho-(deoxyribonucleotide)m = (deoxyribonucleotide)n+m + AMP + beta-nicotinamide D-nucleotide.. In terms of biological role, DNA ligase that catalyzes the formation of phosphodiester linkages between 5'-phosphoryl and 3'-hydroxyl groups in double-stranded DNA using NAD as a coenzyme and as the energy source for the reaction. It is essential for DNA replication and repair of damaged DNA. This chain is DNA ligase, found in Chlorobium luteolum (strain DSM 273 / BCRC 81028 / 2530) (Pelodictyon luteolum).